Consider the following 154-residue polypeptide: Transcriptional repressor NrdR (154 aa).

The segment at 3–34 (CPFCRHPDSRVVDSRETDEGQAIRRRRSCPEC) is a zinc-finger region. The region spanning 46-136 (LAVVKRSGVT…VYRSFSSAED (91 aa)) is the ATP-cone domain.

Belongs to the NrdR family. It depends on Zn(2+) as a cofactor.

Its function is as follows. Negatively regulates transcription of bacterial ribonucleotide reductase nrd genes and operons by binding to NrdR-boxes. The protein is Transcriptional repressor NrdR of Mycolicibacterium gilvum (strain PYR-GCK) (Mycobacterium gilvum (strain PYR-GCK)).